A 319-amino-acid polypeptide reads, in one-letter code: ATP-dependent 6-phosphofructokinase (319 aa).

Glycine 11 is a binding site for ATP. 21-25 contacts ADP; the sequence is RAVVR. Residues 72 to 73 and 102 to 105 each bind ATP; these read RC and GDGS. Aspartate 103 is a binding site for Mg(2+). 125–127 contacts substrate; the sequence is TID. Aspartate 127 serves as the catalytic Proton acceptor. Arginine 154 contacts ADP. Residues arginine 162 and 169-171 contribute to the substrate site; that span reads MGR. Residues 185–187, arginine 211, and 213–215 contribute to the ADP site; these read GAE and KKH. Substrate contacts are provided by residues glutamate 222, arginine 243, and 249–252; that span reads HIQR.

Belongs to the phosphofructokinase type A (PFKA) family. ATP-dependent PFK group I subfamily. Prokaryotic clade 'B1' sub-subfamily. Homotetramer. The cofactor is Mg(2+).

It localises to the cytoplasm. The enzyme catalyses beta-D-fructose 6-phosphate + ATP = beta-D-fructose 1,6-bisphosphate + ADP + H(+). The protein operates within carbohydrate degradation; glycolysis; D-glyceraldehyde 3-phosphate and glycerone phosphate from D-glucose: step 3/4. Its activity is regulated as follows. Allosterically activated by ADP and other diphosphonucleosides, and allosterically inhibited by phosphoenolpyruvate. Catalyzes the phosphorylation of D-fructose 6-phosphate to fructose 1,6-bisphosphate by ATP, the first committing step of glycolysis. In Shouchella clausii (strain KSM-K16) (Alkalihalobacillus clausii), this protein is ATP-dependent 6-phosphofructokinase.